The following is a 943-amino-acid chain: Isoleucine--tRNA ligase 1 (943 aa).

The 'HIGH' region motif lies at 58-68 (PYANGTIHIGH). Position 567 (E567) interacts with L-isoleucyl-5'-AMP. Positions 608-612 (KMSKS) match the 'KMSKS' region motif. K611 is a binding site for ATP. Residues C906, C909, C926, and C929 each coordinate Zn(2+).

It belongs to the class-I aminoacyl-tRNA synthetase family. IleS type 1 subfamily. As to quaternary structure, monomer. Zn(2+) is required as a cofactor.

The protein localises to the cytoplasm. The catalysed reaction is tRNA(Ile) + L-isoleucine + ATP = L-isoleucyl-tRNA(Ile) + AMP + diphosphate. Catalyzes the attachment of isoleucine to tRNA(Ile). As IleRS can inadvertently accommodate and process structurally similar amino acids such as valine, to avoid such errors it has two additional distinct tRNA(Ile)-dependent editing activities. One activity is designated as 'pretransfer' editing and involves the hydrolysis of activated Val-AMP. The other activity is designated 'posttransfer' editing and involves deacylation of mischarged Val-tRNA(Ile). Its function is as follows. Confers resistance to the antibiotic mupirocin (pseudomonic acid A), an Ile-analog produced by P.fluorescens NCIMB 10586 itself that competitively inhibits activation by Ile-tRNA synthetase, thus inhibiting protein biosynthesis. This chain is Isoleucine--tRNA ligase 1 (ileS1), found in Pseudomonas fluorescens.